The sequence spans 150 residues: MSTLEQKLTEMLTAPVEALGFELVGIEFIRGRTSTLRIYIDSEDGINVDDCADVSHQVSAVMDVEDPITVAYNLEVSSPGLDRPMFTAEHYQRFTGEEVALVLRMAVQNRRKWQGIIKAVDGEMITVTVEGKDEVFALSNIQKANLVPHF.

The protein belongs to the RimP family.

The protein resides in the cytoplasm. Functionally, required for maturation of 30S ribosomal subunits. The sequence is that of Ribosome maturation factor RimP from Klebsiella pneumoniae (strain 342).